The chain runs to 742 residues: Potassium transporter 19 (742 aa).

Topologically, residues 1–46 (MSVQEDGAARPEPDVLRRHDSLYGDAEKVSNNKRHGAGGSWARTLQ) are cytoplasmic. A helical membrane pass occupies residues 47–67 (LAFQSIGVVYGDVGTSPLYVY). Residues 68–83 (SSTFPNGIKHPDDLVG) lie on the Extracellular side of the membrane. Residues 84-104 (VLSLILYTLILIPMVKYVFIV) form a helical membrane-spanning segment. Residues 105–170 (LYANDNGDGG…QKLESSNAAK (66 aa)) are Cytoplasmic-facing. A helical membrane pass occupies residues 171–191 (IALFTITILGTSMVMGDGTLT). The Extracellular segment spans residues 192-206 (PAISVLSAVSGIREK). The helical transmembrane segment at 207–227 (APNLTQSQVVWISVAILFVLF) threads the bilayer. The Cytoplasmic segment spans residues 228 to 236 (SMQRFGTDK). The chain crosses the membrane as a helical span at residues 237 to 257 (VGYTFAPVISVWFLLIAGIGM). At 258–287 (YNLTVHEITILRAFNPKYIVDYFRRNGKEA) the chain is on the extracellular side. A glycan (N-linked (GlcNAc...) asparagine) is linked at Asn259. Residues 288 to 308 (WVSLGGVVLCITGTEAMFADL) form a helical membrane-spanning segment. Residues 309–317 (GHFNIRAIQ) are Cytoplasmic-facing. Residues 318 to 338 (LSFTCVLFPSVALCYMGQAAY) form a helical membrane-spanning segment. Topologically, residues 339 to 352 (LRKFPENVGDTFYR) are extracellular. The chain crosses the membrane as a helical span at residues 353 to 373 (SIPAPLFWPVFVVAIMGAIIA). The Cytoplasmic portion of the chain corresponds to 374–409 (SQAMLSGAFAILSKALSLGCFPRVEVVHTSNKYEGQ). The helical transmembrane segment at 410–430 (VYIPEVNFLIGAASVAVTLAF) threads the bilayer. Topologically, residues 431 to 441 (QTTANIGNAYG) are extracellular. A helical transmembrane segment spans residues 442 to 462 (ICVVTVFSITTHLMTVVMLLI). Residues 463–468 (WKVRLP) are Cytoplasmic-facing. A helical transmembrane segment spans residues 469–489 (FIAAFYAAFGLAEFLYLSSIL). The Extracellular segment spans residues 490 to 495 (SKFAEG). Residues 496 to 516 (GYLPFCFSLVLMALMATWHYV) traverse the membrane as a helical segment. Residues 517 to 742 (HVKRYWYELD…LLKVGITYEI (226 aa)) are Cytoplasmic-facing.

The protein belongs to the HAK/KUP transporter (TC 2.A.72.3) family.

The protein resides in the membrane. In terms of biological role, high-affinity potassium transporter. This chain is Potassium transporter 19 (HAK19), found in Oryza sativa subsp. japonica (Rice).